The following is a 137-amino-acid chain: Small ribosomal subunit protein uS9 (137 aa).

Belongs to the universal ribosomal protein uS9 family.

In Saccharolobus solfataricus (strain ATCC 35092 / DSM 1617 / JCM 11322 / P2) (Sulfolobus solfataricus), this protein is Small ribosomal subunit protein uS9 (rps9).